The primary structure comprises 301 residues: Homeobox protein Hox-D13 (301 aa).

2 disordered regions span residues methionine 1 to glutamine 20 and glycine 55 to glycine 75. Over residues serine 8–proline 18 the composition is skewed to gly residues. A DNA-binding region (homeobox) is located at residues glycine 234–valine 293.

It belongs to the Abd-B homeobox family.

The protein localises to the nucleus. In terms of biological role, sequence-specific transcription factor that binds gene promoters and activates their transcription. Part of a developmental regulatory system that provides cells with specific positional identities on the anterior-posterior axis. This chain is Homeobox protein Hox-D13 (HOXD13), found in Gallus gallus (Chicken).